A 356-amino-acid polypeptide reads, in one-letter code: Protein RecA (356 aa).

68 to 75 (GQESSGKT) is an ATP binding site.

The protein belongs to the RecA family.

It localises to the cytoplasm. In terms of biological role, can catalyze the hydrolysis of ATP in the presence of single-stranded DNA, the ATP-dependent uptake of single-stranded DNA by duplex DNA, and the ATP-dependent hybridization of homologous single-stranded DNAs. It interacts with LexA causing its activation and leading to its autocatalytic cleavage. The polypeptide is Protein RecA (Thermotoga petrophila (strain ATCC BAA-488 / DSM 13995 / JCM 10881 / RKU-1)).